The sequence spans 540 residues: Dynein axonemal assembly factor 3 homolog (540 aa).

The segment at 480 to 499 (AVTEAMPESTFKYDTDTDYG) is disordered.

It belongs to the DNAAF3 family. Expressed in mechanosensory chordotonal (Ch) neurons, spermatocytes and spermatids (at protein level).

The protein resides in the cytoplasm. It localises to the dynein axonemal particle. In terms of biological role, required for the assembly of axonemal inner and outer dynein arms. Involved in the cytoplasmic preassembly of dyneins into complexes before their transport into cilia. Essential for the development of axonemal dynein motors in the sensory cilium of mechanosensory chordotonal (Ch) neurons and sperm flagellum, and consequently, is required for the mechanotransduction process of hearing and sperm mobility. The sequence is that of Dynein axonemal assembly factor 3 homolog from Drosophila melanogaster (Fruit fly).